The primary structure comprises 174 residues: NADH-ubiquinone oxidoreductase chain 6 (174 aa).

5 helical membrane passes run 1 to 21, 24 to 44, 47 to 67, 86 to 106, and 151 to 171; these read MTYV…GFSS, SPIY…AIIL, GGGY…MVVF, VEVL…VLWV, and WLVV…IEIA.

This sequence belongs to the complex I subunit 6 family. Core subunit of respiratory chain NADH dehydrogenase (Complex I) which is composed of 45 different subunits.

The protein localises to the mitochondrion inner membrane. It carries out the reaction a ubiquinone + NADH + 5 H(+)(in) = a ubiquinol + NAD(+) + 4 H(+)(out). In terms of biological role, core subunit of the mitochondrial membrane respiratory chain NADH dehydrogenase (Complex I) which catalyzes electron transfer from NADH through the respiratory chain, using ubiquinone as an electron acceptor. Essential for the catalytic activity and assembly of complex I. The protein is NADH-ubiquinone oxidoreductase chain 6 (MT-ND6) of Gorilla gorilla gorilla (Western lowland gorilla).